We begin with the raw amino-acid sequence, 386 residues long: CUE domain-containing protein 1 (386 aa).

Low complexity predominate over residues 1–10 (MTSLFRRSSS). The tract at residues 1–40 (MTSLFRRSSSGSGGGGTAGARGGGGGTAAPQELNNSRPAR) is disordered. Residues 11–27 (GSGGGGTAGARGGGGGT) are compositionally biased toward gly residues. In terms of domain architecture, CUE spans 46 to 89 (EFNQAMDDFKTMFPNMDYDIIECVLRANSGAVDATIDQLLQMNL). 3 disordered regions span residues 147 to 172 (LAPPTPPPRIDALGSGAPTSQRRYRN), 195 to 225 (SIQGNAGGPKPGSGEGCPPAMAGPGPGDQES), and 367 to 386 (DFRGRRQEAPKVEEGLREGQ). Positions 199–209 (NAGGPKPGSGE) are enriched in gly residues.

This is CUE domain-containing protein 1 (CUEDC1) from Homo sapiens (Human).